A 131-amino-acid polypeptide reads, in one-letter code: D-ribose pyranase (131 aa).

The active-site Proton donor is the His-20. Residues Asp-28, His-98, and 120–122 (YAN) each bind substrate.

This sequence belongs to the RbsD / FucU family. RbsD subfamily. As to quaternary structure, homodecamer.

The protein resides in the cytoplasm. It catalyses the reaction beta-D-ribopyranose = beta-D-ribofuranose. Its pathway is carbohydrate metabolism; D-ribose degradation; D-ribose 5-phosphate from beta-D-ribopyranose: step 1/2. Functionally, catalyzes the interconversion of beta-pyran and beta-furan forms of D-ribose. The sequence is that of D-ribose pyranase from Chloroflexus aggregans (strain MD-66 / DSM 9485).